Consider the following 106-residue polypeptide: Large ribosomal subunit protein eL30 (106 aa).

Belongs to the eukaryotic ribosomal protein eL30 family.

The sequence is that of Large ribosomal subunit protein eL30 from Methanococcus maripaludis (strain C5 / ATCC BAA-1333).